Reading from the N-terminus, the 94-residue chain is MKMANHPRPGDIIQESLDELNVSLREFARAMEIAPSTASRLLTGKAALTPEMAIKLSVVIGSSPQMWLNLQNAWSLAEAEKTVDVSRLRRLVTQ.

In terms of domain architecture, HTH cro/C1-type spans 13 to 67 (IQESLDELNVSLREFARAMEIAPSTASRLLTGKAALTPEMAIKLSVVIGSSPQMW). Residues 24–43 (LREFARAMEIAPSTASRLLT) constitute a DNA-binding region (H-T-H motif).

It belongs to the VapA/VapI family.

This is an uncharacterized protein from Escherichia coli (strain K12).